The chain runs to 347 residues: MNLQGKNVTLYDMSLLXFMHPNPYHITLEQMIAVPTVLDAPRIPLIEITLRDGLGGRSINYVFPAHIDEEYLRAVIPRLKQAKVSALLLPGIGTVDHLNMALDCGVSTILVATHCTEADVSEHHIGMSRMLGADTVGFLMMAHMIRRGKSAGAARLDVKCYGANCIYCTDSAGYMLPDEVSEKIGLLRAELNPATEIGFHGHHNMGMAIANSLAGHRGGASRIDGSVAGLGAGAGNTPLEVFVAVCKRMGVETGIDLYKIMDVAEDLVVPMMDQPIRVDRDALTLGYAGVYSSFLLFAQRAEKKYGVPARDILVELGRRGTVGGQEDMIEDLALDMSRARQKQKVSA.

Residues 8–261 (VTLYDMSLLX…ETGIDLYKIM (254 aa)) form the Pyruvate carboxyltransferase domain. His20 (proton acceptor) is an active-site residue. Substrate contacts are provided by Ser171 and His200. Mn(2+) is bound by residues His200 and His202. Residue Tyr291 participates in substrate binding.

The protein belongs to the 4-hydroxy-2-oxovalerate aldolase family.

The enzyme catalyses (S)-4-hydroxy-2-oxopentanoate = acetaldehyde + pyruvate. In Metapseudomonas furukawaii (Pseudomonas furukawaii), this protein is 4-hydroxy-2-oxovalerate aldolase 1 (salH).